The sequence spans 231 residues: Large ribosomal subunit protein uL1 (231 aa).

Belongs to the universal ribosomal protein uL1 family. As to quaternary structure, part of the 50S ribosomal subunit.

In terms of biological role, binds directly to 23S rRNA. The L1 stalk is quite mobile in the ribosome, and is involved in E site tRNA release. Functionally, protein L1 is also a translational repressor protein, it controls the translation of the L11 operon by binding to its mRNA. The polypeptide is Large ribosomal subunit protein uL1 (Acinetobacter baylyi (strain ATCC 33305 / BD413 / ADP1)).